We begin with the raw amino-acid sequence, 312 residues long: DNA-directed RNA polymerase subunit alpha (312 aa).

The segment at 1 to 226 (MIEFEKPNIT…EHFKVFESAD (226 aa)) is alpha N-terminal domain (alpha-NTD). An alpha C-terminal domain (alpha-CTD) region spans residues 243–312 (KEKKLEMTIE…DLGLSLRQED (70 aa)).

This sequence belongs to the RNA polymerase alpha chain family. In terms of assembly, homodimer. The RNAP catalytic core consists of 2 alpha, 1 beta, 1 beta' and 1 omega subunit. When a sigma factor is associated with the core the holoenzyme is formed, which can initiate transcription.

The catalysed reaction is RNA(n) + a ribonucleoside 5'-triphosphate = RNA(n+1) + diphosphate. In terms of biological role, DNA-dependent RNA polymerase catalyzes the transcription of DNA into RNA using the four ribonucleoside triphosphates as substrates. In Lactobacillus acidophilus (strain ATCC 700396 / NCK56 / N2 / NCFM), this protein is DNA-directed RNA polymerase subunit alpha.